The primary structure comprises 466 residues: 3-isopropylmalate dehydratase large subunit (466 aa).

Cys-347, Cys-407, and Cys-410 together coordinate [4Fe-4S] cluster.

Belongs to the aconitase/IPM isomerase family. LeuC type 1 subfamily. In terms of assembly, heterodimer of LeuC and LeuD. [4Fe-4S] cluster serves as cofactor.

It catalyses the reaction (2R,3S)-3-isopropylmalate = (2S)-2-isopropylmalate. The protein operates within amino-acid biosynthesis; L-leucine biosynthesis; L-leucine from 3-methyl-2-oxobutanoate: step 2/4. Catalyzes the isomerization between 2-isopropylmalate and 3-isopropylmalate, via the formation of 2-isopropylmaleate. This chain is 3-isopropylmalate dehydratase large subunit, found in Shewanella woodyi (strain ATCC 51908 / MS32).